Consider the following 952-residue polypeptide: UPF0182 protein SRU_2225 (952 aa).

The next 7 membrane-spanning stretches (helical) occupy residues 12 to 32, 52 to 72, 109 to 129, 168 to 188, 207 to 227, 247 to 267, and 277 to 297; these read ILLG…GLVV, AQVL…GGNF, LGYV…SGRW, AVVG…VIAG, LGAN…LDLY, VVIP…GLVG, and LLGI…VLAP. A disordered region spans residues 917 to 952; it reads VPLPDTTGTVPPPTSSDTTGTMTAPTGDVSEVTGGS. Over residues 931-940 the composition is skewed to polar residues; the sequence is SSDTTGTMTA.

Belongs to the UPF0182 family.

It localises to the cell membrane. The chain is UPF0182 protein SRU_2225 from Salinibacter ruber (strain DSM 13855 / M31).